Here is a 156-residue protein sequence, read N- to C-terminus: Large ribosomal subunit protein uL22 (156 aa).

Belongs to the universal ribosomal protein uL22 family. In terms of assembly, part of the 50S ribosomal subunit.

Functionally, this protein binds specifically to 23S rRNA. It makes multiple contacts with different domains of the 23S rRNA in the assembled 50S subunit and ribosome. In terms of biological role, the globular domain of the protein is located near the polypeptide exit tunnel on the outside of the subunit, while an extended beta-hairpin is found that lines the wall of the exit tunnel in the center of the 70S ribosome. The polypeptide is Large ribosomal subunit protein uL22 (Hyperthermus butylicus (strain DSM 5456 / JCM 9403 / PLM1-5)).